The following is a 298-amino-acid chain: uncharacterized protein (298 aa).

The protein resides in the cytoplasm. Its subcellular location is the nucleus. This is an uncharacterized protein from Schizosaccharomyces pombe (strain 972 / ATCC 24843) (Fission yeast).